Reading from the N-terminus, the 444-residue chain is Glutamate-1-semialdehyde 2,1-aminomutase (444 aa).

At lysine 267 the chain carries N6-(pyridoxal phosphate)lysine.

It belongs to the class-III pyridoxal-phosphate-dependent aminotransferase family. HemL subfamily. Homodimer. The cofactor is pyridoxal 5'-phosphate.

The protein localises to the cytoplasm. It carries out the reaction (S)-4-amino-5-oxopentanoate = 5-aminolevulinate. It participates in porphyrin-containing compound metabolism; protoporphyrin-IX biosynthesis; 5-aminolevulinate from L-glutamyl-tRNA(Glu): step 2/2. This is Glutamate-1-semialdehyde 2,1-aminomutase from Xylella fastidiosa (strain M12).